The primary structure comprises 198 residues: Peptidyl-tRNA hydrolase (198 aa).

Tyrosine 17 contacts tRNA. The active-site Proton acceptor is histidine 22. Residues tyrosine 74, asparagine 76, and asparagine 122 each coordinate tRNA.

It belongs to the PTH family. Monomer.

Its subcellular location is the cytoplasm. It catalyses the reaction an N-acyl-L-alpha-aminoacyl-tRNA + H2O = an N-acyl-L-amino acid + a tRNA + H(+). Functionally, hydrolyzes ribosome-free peptidyl-tRNAs (with 1 or more amino acids incorporated), which drop off the ribosome during protein synthesis, or as a result of ribosome stalling. Catalyzes the release of premature peptidyl moieties from peptidyl-tRNA molecules trapped in stalled 50S ribosomal subunits, and thus maintains levels of free tRNAs and 50S ribosomes. The protein is Peptidyl-tRNA hydrolase of Kineococcus radiotolerans (strain ATCC BAA-149 / DSM 14245 / SRS30216).